The following is a 498-amino-acid chain: Glycerol kinase (498 aa).

Residue Thr-12 coordinates ADP. Residues Thr-12, Thr-13, and Ser-14 each contribute to the ATP site. Residue Thr-12 participates in sn-glycerol 3-phosphate binding. Arg-16 contributes to the ADP binding site. Sn-glycerol 3-phosphate is bound by residues Arg-82, Glu-83, Tyr-134, and Asp-243. Glycerol is bound by residues Arg-82, Glu-83, Tyr-134, Asp-243, and Gln-244. ADP-binding residues include Thr-265 and Gly-308. 4 residues coordinate ATP: Thr-265, Gly-308, Gln-312, and Gly-409. 2 residues coordinate ADP: Gly-409 and Asn-413.

It belongs to the FGGY kinase family. As to quaternary structure, homotetramer and homodimer (in equilibrium).

The catalysed reaction is glycerol + ATP = sn-glycerol 3-phosphate + ADP + H(+). The protein operates within polyol metabolism; glycerol degradation via glycerol kinase pathway; sn-glycerol 3-phosphate from glycerol: step 1/1. Its activity is regulated as follows. Activated by phosphorylation and inhibited by fructose 1,6-bisphosphate (FBP). Its function is as follows. Key enzyme in the regulation of glycerol uptake and metabolism. Catalyzes the phosphorylation of glycerol to yield sn-glycerol 3-phosphate. In Agathobacter rectalis (strain ATCC 33656 / DSM 3377 / JCM 17463 / KCTC 5835 / VPI 0990) (Eubacterium rectale), this protein is Glycerol kinase.